Here is an 834-residue protein sequence, read N- to C-terminus: Periplasmic nitrate reductase (834 aa).

Residues 1–32 (MTEPKIDRRQLLKLEAAAIAAAAAGMPTVARA) constitute a signal peptide (tat-type signal). In terms of domain architecture, 4Fe-4S Mo/W bis-MGD-type spans 44–100 (LKWDKAACRFCGTGCSVMVATKDNRVVATHGDIKAEVNRGLNCVKGYFLSKIMYGHD). [4Fe-4S] cluster is bound by residues C51, C54, C58, and C86. Mo-bis(molybdopterin guanine dinucleotide) is bound by residues K88, Q155, N180, C184, 217 to 224 (WGSNMAEM), 248 to 252 (STFEH), 267 to 269 (QTD), M378, Q382, N488, 514 to 515 (SD), K537, D564, and 724 to 733 (TGRVVEHWHS). Residue W800 participates in substrate binding. 2 residues coordinate Mo-bis(molybdopterin guanine dinucleotide): N808 and K825.

Belongs to the prokaryotic molybdopterin-containing oxidoreductase family. NasA/NapA/NarB subfamily. As to quaternary structure, component of the periplasmic nitrate reductase NapAB complex composed of NapA and NapB. [4Fe-4S] cluster is required as a cofactor. Mo-bis(molybdopterin guanine dinucleotide) serves as cofactor. In terms of processing, predicted to be exported by the Tat system. The position of the signal peptide cleavage has not been experimentally proven.

The protein localises to the periplasm. The enzyme catalyses 2 Fe(II)-[cytochrome] + nitrate + 2 H(+) = 2 Fe(III)-[cytochrome] + nitrite + H2O. In terms of biological role, catalytic subunit of the periplasmic nitrate reductase complex NapAB. Receives electrons from NapB and catalyzes the reduction of nitrate to nitrite. The polypeptide is Periplasmic nitrate reductase (Bradyrhizobium sp. (strain ORS 278)).